A 205-amino-acid polypeptide reads, in one-letter code: Pyrrolidone-carboxylate peptidase (205 aa).

Residues Glu-78, Cys-141, and His-165 contribute to the active site.

It belongs to the peptidase C15 family. As to quaternary structure, homotetramer.

It localises to the cytoplasm. It catalyses the reaction Release of an N-terminal pyroglutamyl group from a polypeptide, the second amino acid generally not being Pro.. Its function is as follows. Removes 5-oxoproline from various penultimate amino acid residues except L-proline. The polypeptide is Pyrrolidone-carboxylate peptidase (Thermosipho africanus (strain TCF52B)).